The following is a 245-amino-acid chain: MIIPALDLIEGQVVRLFQGDYGQVTEYKVDPAEQFNLYHQAGANWLHLVDLTGAKDTTARQLDLIARLLASTPANIQIGGGVRNEADVQDLLNAGAQRVVIGSTAVKQPELVKGWMEKYGAEKIVLALDINIDENGTRNVAISGWQEDSGVTIEALLEDYLTVGLKHVLCTDISRDGTLQGSNVELYVDLCKQYPQVQFQSSGGIGSLDDIVALKGSGVAGVIVGRALLDGKFTAEEAFQCWQSE.

Residue Asp-7 is the Proton acceptor of the active site. The active-site Proton donor is Asp-129.

This sequence belongs to the HisA/HisF family.

Its subcellular location is the cytoplasm. It carries out the reaction 1-(5-phospho-beta-D-ribosyl)-5-[(5-phospho-beta-D-ribosylamino)methylideneamino]imidazole-4-carboxamide = 5-[(5-phospho-1-deoxy-D-ribulos-1-ylimino)methylamino]-1-(5-phospho-beta-D-ribosyl)imidazole-4-carboxamide. It functions in the pathway amino-acid biosynthesis; L-histidine biosynthesis; L-histidine from 5-phospho-alpha-D-ribose 1-diphosphate: step 4/9. The chain is 1-(5-phosphoribosyl)-5-[(5-phosphoribosylamino)methylideneamino] imidazole-4-carboxamide isomerase from Aliivibrio salmonicida (strain LFI1238) (Vibrio salmonicida (strain LFI1238)).